The primary structure comprises 64 residues: Large ribosomal subunit protein bL28c (64 aa).

Belongs to the bacterial ribosomal protein bL28 family.

The protein resides in the plastid. The protein localises to the chloroplast. In Gracilaria tenuistipitata var. liui (Red alga), this protein is Large ribosomal subunit protein bL28c.